A 289-amino-acid polypeptide reads, in one-letter code: Phosphatidylglycerol--prolipoprotein diacylglyceryl transferase (289 aa).

Transmembrane regions (helical) follow at residues 21-41 (IGPL…LLGI), 53-73 (IDPN…IPAA), 95-115 (IWHG…ALIL), and 122-142 (IPIW…QAIG). Arginine 143 is a binding site for a 1,2-diacyl-sn-glycero-3-phospho-(1'-sn-glycerol). The next 3 helical transmembrane spans lie at 182–202 (PTFL…IWLF), 215–235 (GVMT…IEGL), and 247–267 (IAQM…VWIY).

It belongs to the Lgt family.

Its subcellular location is the cell inner membrane. It catalyses the reaction L-cysteinyl-[prolipoprotein] + a 1,2-diacyl-sn-glycero-3-phospho-(1'-sn-glycerol) = an S-1,2-diacyl-sn-glyceryl-L-cysteinyl-[prolipoprotein] + sn-glycerol 1-phosphate + H(+). Its pathway is protein modification; lipoprotein biosynthesis (diacylglyceryl transfer). Its function is as follows. Catalyzes the transfer of the diacylglyceryl group from phosphatidylglycerol to the sulfhydryl group of the N-terminal cysteine of a prolipoprotein, the first step in the formation of mature lipoproteins. This chain is Phosphatidylglycerol--prolipoprotein diacylglyceryl transferase, found in Synechococcus elongatus (strain ATCC 33912 / PCC 7942 / FACHB-805) (Anacystis nidulans R2).